The primary structure comprises 598 residues: NADH-quinone oxidoreductase subunit C/D (598 aa).

The NADH dehydrogenase I subunit C stretch occupies residues 1–189 (MTDSTTHDRE…DPFELTRQKQ (189 aa)). An NADH dehydrogenase I subunit D region spans residues 213–598 (DFMFLNLGPN…IDFVMSDVDR (386 aa)).

It in the N-terminal section; belongs to the complex I 30 kDa subunit family. This sequence in the C-terminal section; belongs to the complex I 49 kDa subunit family. NDH-1 is composed of 13 different subunits. Subunits NuoB, CD, E, F, and G constitute the peripheral sector of the complex.

Its subcellular location is the cell inner membrane. The enzyme catalyses a quinone + NADH + 5 H(+)(in) = a quinol + NAD(+) + 4 H(+)(out). Its function is as follows. NDH-1 shuttles electrons from NADH, via FMN and iron-sulfur (Fe-S) centers, to quinones in the respiratory chain. The immediate electron acceptor for the enzyme in this species is believed to be ubiquinone. Couples the redox reaction to proton translocation (for every two electrons transferred, four hydrogen ions are translocated across the cytoplasmic membrane), and thus conserves the redox energy in a proton gradient. This chain is NADH-quinone oxidoreductase subunit C/D, found in Edwardsiella ictaluri (strain 93-146).